A 536-amino-acid chain; its full sequence is 3',5'-cyclic-AMP phosphodiesterase 4C (536 aa).

The tract at residues glutamine 49–glycine 69 is disordered. The PDEase domain occupies valine 178 to serine 507. Histidine 254 acts as the Proton donor in catalysis. Histidine 254 serves as a coordination point for 3',5'-cyclic AMP. The AMP site is built by histidine 254 and histidine 258. 4 residues coordinate Zn(2+): histidine 258, histidine 294, aspartate 295, and aspartate 412. Residues aspartate 295, aspartate 412, glutamine 463, and phenylalanine 466 each contribute to the AMP site. Mg(2+) is bound at residue aspartate 295. A Mn(2+)-binding site is contributed by aspartate 295. Positions 463 and 466 each coordinate 3',5'-cyclic AMP. At serine 507 the chain carries Phosphoserine.

The protein belongs to the cyclic nucleotide phosphodiesterase family. PDE4 subfamily. As to quaternary structure, part of a complex containing AKAP5, ADCY5, ADCY6 and PKD2. Requires Zn(2+) as cofactor. It depends on Mg(2+) as a cofactor. The cofactor is Mn(2+).

It localises to the cell projection. It is found in the cilium. The catalysed reaction is 3',5'-cyclic AMP + H2O = AMP + H(+). It participates in purine metabolism; 3',5'-cyclic AMP degradation; AMP from 3',5'-cyclic AMP: step 1/1. In terms of biological role, hydrolyzes the second messenger cAMP, which is a key regulator of many important physiological processes. This Rattus norvegicus (Rat) protein is 3',5'-cyclic-AMP phosphodiesterase 4C.